A 276-amino-acid chain; its full sequence is Large ribosomal subunit protein uL2 (276 aa).

The disordered stretch occupies residues 224–276 (AMNPVDHPLGGGEGKSSGGRHPVTPWGKPTKGYKTRNKKKPSSKLIVKRRGQK). Residues 254–276 (KGYKTRNKKKPSSKLIVKRRGQK) are compositionally biased toward basic residues.

It belongs to the universal ribosomal protein uL2 family. Part of the 50S ribosomal subunit. Forms a bridge to the 30S subunit in the 70S ribosome.

In terms of biological role, one of the primary rRNA binding proteins. Required for association of the 30S and 50S subunits to form the 70S ribosome, for tRNA binding and peptide bond formation. It has been suggested to have peptidyltransferase activity; this is somewhat controversial. Makes several contacts with the 16S rRNA in the 70S ribosome. This is Large ribosomal subunit protein uL2 from Solidesulfovibrio magneticus (strain ATCC 700980 / DSM 13731 / RS-1) (Desulfovibrio magneticus).